The sequence spans 475 residues: tRNA-2-methylthio-N(6)-dimethylallyladenosine synthase (475 aa).

The span at 1 to 10 (MQETTVKRDG) shows a compositional bias: basic and acidic residues. The disordered stretch occupies residues 1-22 (MQETTVKRDGASPSDAGTPATT). The MTTase N-terminal domain occupies 27-144 (GKLYIRTFGC…LPDLIKRRRA (118 aa)). [4Fe-4S] cluster is bound by residues C36, C73, C107, C181, C185, and C188. One can recognise a Radical SAM core domain in the interval 167 to 400 (RVDGATAFVS…QALINQQAAA (234 aa)). Residues 403 to 466 (QGMIGTRQRV…TNSLRGRVAG (64 aa)) form the TRAM domain.

The protein belongs to the methylthiotransferase family. MiaB subfamily. Monomer. [4Fe-4S] cluster serves as cofactor.

It localises to the cytoplasm. It carries out the reaction N(6)-dimethylallyladenosine(37) in tRNA + (sulfur carrier)-SH + AH2 + 2 S-adenosyl-L-methionine = 2-methylsulfanyl-N(6)-dimethylallyladenosine(37) in tRNA + (sulfur carrier)-H + 5'-deoxyadenosine + L-methionine + A + S-adenosyl-L-homocysteine + 2 H(+). Its function is as follows. Catalyzes the methylthiolation of N6-(dimethylallyl)adenosine (i(6)A), leading to the formation of 2-methylthio-N6-(dimethylallyl)adenosine (ms(2)i(6)A) at position 37 in tRNAs that read codons beginning with uridine. This is tRNA-2-methylthio-N(6)-dimethylallyladenosine synthase from Bordetella parapertussis (strain 12822 / ATCC BAA-587 / NCTC 13253).